Reading from the N-terminus, the 340-residue chain is Protein-arginine kinase (340 aa).

One can recognise a Phosphagen kinase C-terminal domain in the interval 14 to 244 (IVITTRIRLA…EQIINQENLS (231 aa)). ATP contacts are provided by residues 17 to 21 (TTRIR), histidine 81, arginine 115, 166 to 170 (RASVM), and 197 to 202 (RGLWGE).

Belongs to the ATP:guanido phosphotransferase family.

It carries out the reaction L-arginyl-[protein] + ATP = N(omega)-phospho-L-arginyl-[protein] + ADP + H(+). Functionally, catalyzes the specific phosphorylation of arginine residues in proteins. The polypeptide is Protein-arginine kinase (Clostridium acetobutylicum (strain ATCC 824 / DSM 792 / JCM 1419 / IAM 19013 / LMG 5710 / NBRC 13948 / NRRL B-527 / VKM B-1787 / 2291 / W)).